Here is a 211-residue protein sequence, read N- to C-terminus: Imidazole glycerol phosphate synthase subunit HisH (211 aa).

The region spanning 1-211 is the Glutamine amidotransferase type-1 domain; it reads MIGIIDYGMG…VGIATGRGNG (211 aa). Cys79 functions as the Nucleophile in the catalytic mechanism. Residues His186 and Glu188 contribute to the active site.

Heterodimer of HisH and HisF.

It is found in the cytoplasm. The enzyme catalyses 5-[(5-phospho-1-deoxy-D-ribulos-1-ylimino)methylamino]-1-(5-phospho-beta-D-ribosyl)imidazole-4-carboxamide + L-glutamine = D-erythro-1-(imidazol-4-yl)glycerol 3-phosphate + 5-amino-1-(5-phospho-beta-D-ribosyl)imidazole-4-carboxamide + L-glutamate + H(+). It catalyses the reaction L-glutamine + H2O = L-glutamate + NH4(+). It functions in the pathway amino-acid biosynthesis; L-histidine biosynthesis; L-histidine from 5-phospho-alpha-D-ribose 1-diphosphate: step 5/9. IGPS catalyzes the conversion of PRFAR and glutamine to IGP, AICAR and glutamate. The HisH subunit catalyzes the hydrolysis of glutamine to glutamate and ammonia as part of the synthesis of IGP and AICAR. The resulting ammonia molecule is channeled to the active site of HisF. The chain is Imidazole glycerol phosphate synthase subunit HisH from Geobacillus kaustophilus (strain HTA426).